Consider the following 60-residue polypeptide: Large ribosomal subunit protein bL32 (60 aa).

2 disordered regions span residues 1 to 22 and 34 to 60; these read MAVQ…HNAL and GETH…KSEA. Basic residues predominate over residues 9–19; the sequence is SPSKRGMHRSH.

This sequence belongs to the bacterial ribosomal protein bL32 family.

This Variovorax paradoxus (strain S110) protein is Large ribosomal subunit protein bL32.